The chain runs to 62 residues: Large ribosomal subunit protein bL32 (62 aa).

This sequence belongs to the bacterial ribosomal protein bL32 family.

The sequence is that of Large ribosomal subunit protein bL32 from Treponema denticola (strain ATCC 35405 / DSM 14222 / CIP 103919 / JCM 8153 / KCTC 15104).